The chain runs to 359 residues: 3-dehydroquinate synthase (359 aa).

NAD(+) is bound by residues 71-76 (DGEQFK), 105-109 (GVIGD), 129-130 (TT), lysine 142, lysine 151, and 169-172 (CLHT). Zn(2+)-binding residues include glutamate 184, histidine 247, and histidine 264.

The protein belongs to the sugar phosphate cyclases superfamily. Dehydroquinate synthase family. The cofactor is Co(2+). It depends on Zn(2+) as a cofactor. Requires NAD(+) as cofactor.

It localises to the cytoplasm. It carries out the reaction 7-phospho-2-dehydro-3-deoxy-D-arabino-heptonate = 3-dehydroquinate + phosphate. It functions in the pathway metabolic intermediate biosynthesis; chorismate biosynthesis; chorismate from D-erythrose 4-phosphate and phosphoenolpyruvate: step 2/7. Its function is as follows. Catalyzes the conversion of 3-deoxy-D-arabino-heptulosonate 7-phosphate (DAHP) to dehydroquinate (DHQ). The chain is 3-dehydroquinate synthase from Shewanella sp. (strain W3-18-1).